Reading from the N-terminus, the 527-residue chain is Endogenous retrovirus group FC1 member 1 Env polyprotein (527 aa).

The surface protein stretch occupies residues 1 to 411; it reads MNSPCDRLQQ…EPRPQNKSKW (411 aa). The CXXC signature appears at 280 to 283; that stretch reads CFLC. The interval 412 to 432 is fusion peptide; that stretch reads AIFLPLVLGISLASSLVASGL. Residues 412–527 form a transmembrane protein region; sequence AIFLPLVLGI…LKKKKSSKRS (116 aa). The CKS-17 motif lies at 477-493; that stretch reads AQNRQALDLLMAEKGRT. A disulfide bridge links cysteine 494 with cysteine 501. Residues 494–502 carry the CX6CC motif; it reads CLFLQEECC.

It belongs to the gamma type-C retroviral envelope protein family. HERV class-I F(c)2 env subfamily. The CXXC motif is highly conserved across a broad range of retroviral envelope proteins. It is thought to participate in the formation of a labile disulfide bond possibly with the CX6CC motif present in the transmembrane domain. As to expression, low expression in skin and testis.

It localises to the virion. In terms of biological role, retroviral envelope proteins mediate receptor recognition and membrane fusion during early infection. Endogenous envelope proteins may have kept, lost or modified their original function during evolution. This endogenous envelope protein has lost its original fusogenic properties. The chain is Endogenous retrovirus group FC1 member 1 Env polyprotein (ERVFC1-1) from Homo sapiens (Human).